We begin with the raw amino-acid sequence, 476 residues long: Bifunctional protein HldE (476 aa).

Residues 1-319 (MKISLPAFEK…AALNLSHGES (319 aa)) are ribokinase. 195-198 (NMSE) provides a ligand contact to ATP. The active site involves D264. Residues 345–476 (MTNGCFDILH…AIIENIMAKQ (132 aa)) form a cytidylyltransferase region.

This sequence in the N-terminal section; belongs to the carbohydrate kinase PfkB family. It in the C-terminal section; belongs to the cytidylyltransferase family. Homodimer.

The catalysed reaction is D-glycero-beta-D-manno-heptose 7-phosphate + ATP = D-glycero-beta-D-manno-heptose 1,7-bisphosphate + ADP + H(+). It carries out the reaction D-glycero-beta-D-manno-heptose 1-phosphate + ATP + H(+) = ADP-D-glycero-beta-D-manno-heptose + diphosphate. It functions in the pathway nucleotide-sugar biosynthesis; ADP-L-glycero-beta-D-manno-heptose biosynthesis; ADP-L-glycero-beta-D-manno-heptose from D-glycero-beta-D-manno-heptose 7-phosphate: step 1/4. Its pathway is nucleotide-sugar biosynthesis; ADP-L-glycero-beta-D-manno-heptose biosynthesis; ADP-L-glycero-beta-D-manno-heptose from D-glycero-beta-D-manno-heptose 7-phosphate: step 3/4. Functionally, catalyzes the phosphorylation of D-glycero-D-manno-heptose 7-phosphate at the C-1 position to selectively form D-glycero-beta-D-manno-heptose-1,7-bisphosphate. In terms of biological role, catalyzes the ADP transfer from ATP to D-glycero-beta-D-manno-heptose 1-phosphate, yielding ADP-D-glycero-beta-D-manno-heptose. The protein is Bifunctional protein HldE of Shewanella loihica (strain ATCC BAA-1088 / PV-4).